The chain runs to 266 residues: Undecaprenyl-diphosphatase (266 aa).

8 consecutive transmembrane segments (helical) span residues 4–24, 41–61, 79–99, 108–128, 143–163, 184–204, 220–240, and 243–263; these read LATI…PVSS, GSAA…LVAY, AVAF…VGAV, LESP…ILAI, MPLR…IPGV, AEFS…YSLW, IGLF…VAIV, and FGFA…LLWL.

This sequence belongs to the UppP family.

The protein resides in the cell inner membrane. It catalyses the reaction di-trans,octa-cis-undecaprenyl diphosphate + H2O = di-trans,octa-cis-undecaprenyl phosphate + phosphate + H(+). Catalyzes the dephosphorylation of undecaprenyl diphosphate (UPP). Confers resistance to bacitracin. In Sphingopyxis alaskensis (strain DSM 13593 / LMG 18877 / RB2256) (Sphingomonas alaskensis), this protein is Undecaprenyl-diphosphatase.